A 577-amino-acid polypeptide reads, in one-letter code: Aspartate--tRNA(Asp/Asn) ligase (577 aa).

Glu171 contacts L-aspartate. The interval 195 to 198 is aspartate; the sequence is QLFK. Arg217 contacts L-aspartate. ATP-binding positions include 217–219 and Gln226; that span reads RDE. His444 contacts L-aspartate. An ATP-binding site is contributed by Glu474. Arg481 contacts L-aspartate. Position 526–529 (526–529) interacts with ATP; it reads GFDR.

It belongs to the class-II aminoacyl-tRNA synthetase family. Type 1 subfamily. As to quaternary structure, homodimer.

It is found in the cytoplasm. It catalyses the reaction tRNA(Asx) + L-aspartate + ATP = L-aspartyl-tRNA(Asx) + AMP + diphosphate. Its function is as follows. Aspartyl-tRNA synthetase with relaxed tRNA specificity since it is able to aspartylate not only its cognate tRNA(Asp) but also tRNA(Asn). Reaction proceeds in two steps: L-aspartate is first activated by ATP to form Asp-AMP and then transferred to the acceptor end of tRNA(Asp/Asn). The sequence is that of Aspartate--tRNA(Asp/Asn) ligase from Helicobacter pylori (strain G27).